The following is a 192-amino-acid chain: Thiosulfate reductase electron transfer subunit PhsB (192 aa).

3 4Fe-4S ferredoxin-type domains span residues 8 to 36 (YVMLHDEKRCIGCQACTVACKVLNDVPEG), 55 to 86 (THFQFVRVSCQHCENAPCVSVCPTGASYRDEN), and 87 to 116 (GIVQVDKSRCIGCDYCVAACPFHVRYLNPQ). 16 residues coordinate [4Fe-4S] cluster: Cys-17, Cys-20, Cys-23, Cys-27, Cys-64, Cys-67, Cys-72, Cys-76, Cys-96, Cys-99, Cys-102, Cys-106, Cys-123, Cys-126, Cys-139, and Cys-143.

Composed of three subunits: PhsA, PhsB and PhsC. Requires [4Fe-4S] cluster as cofactor.

The protein localises to the cell inner membrane. Its function is as follows. Component of the PhsABC thiosulfate reductase that catalyzes the reduction of thiosulfate to sulfite and hydrogen sulfide, with menaquinol as the sole electron donor. Proton motive force (PMF) is required to drive transmembrane electron transfer within the reductase. The PhsB subunit transfers electrons between PhsC and PhsA. This Salmonella typhi protein is Thiosulfate reductase electron transfer subunit PhsB (phsB).